The chain runs to 250 residues: Golgi SNAP receptor complex member 1 (250 aa).

Alanine 2 carries the N-acetylalanine modification. Topologically, residues 2–229 (AAGTSNYWED…QRINLRKRRD (228 aa)) are cytoplasmic. Positions 10 to 30 (EDLRKQARQLENELDLKLVSF) form a coiled coil. A disordered region spans residues 39–59 (HSSARDGRRDRYSSDTTPLLN). Positions 41–51 (SARDGRRDRYS) are enriched in basic and acidic residues. The stretch at 70–93 (MAIEIEQLLARLTGINDKMAEYTS) forms a coiled coil. Serine 141 is modified (phosphoserine). The chain crosses the membrane as a helical; Anchor for type IV membrane protein span at residues 230 to 250 (SLILGGVIGVCTILLLLYAFH).

This sequence belongs to the GOSR1 family. In terms of assembly, component of several multiprotein Golgi SNARE complexes. Identified in a SNARE complex with BET1, STX5 and YKT6, in a SNARE complex with BET1L, STX5 and YKT6, in a SNARE complex with STX5, GOSR2, SEC22B and BET1, and in complex with STX5 and COG3. Interacts with GABARAPL2.

The protein resides in the golgi apparatus membrane. In terms of biological role, involved in transport from the ER to the Golgi apparatus as well as in intra-Golgi transport. It belongs to a super-family of proteins called t-SNAREs or soluble NSF (N-ethylmaleimide-sensitive factor) attachment protein receptor. May play a protective role against hydrogen peroxide induced cytotoxicity under glutathione depleted conditions in neuronal cells by regulating the intracellular ROS levels via inhibition of p38 MAPK (MAPK11, MAPK12, MAPK13 and MAPK14). Participates in docking and fusion stage of ER to cis-Golgi transport. Plays an important physiological role in VLDL-transport vesicle-Golgi fusion and thus in VLDL delivery to the hepatic cis-Golgi. The protein is Golgi SNAP receptor complex member 1 (GOSR1) of Bos taurus (Bovine).